Here is a 252-residue protein sequence, read N- to C-terminus: Isoprenyl transferase (252 aa).

D32 is a catalytic residue. D32 lines the Mg(2+) pocket. Substrate-binding positions include 33-36 (GNGR), W37, R45, H49, and 77-79 (STE). N80 (proton acceptor) is an active-site residue. Substrate is bound by residues W81, R83, R200, and 206–208 (RLS). E219 serves as a coordination point for Mg(2+).

Belongs to the UPP synthase family. Homodimer. Mg(2+) is required as a cofactor.

In terms of biological role, catalyzes the condensation of isopentenyl diphosphate (IPP) with allylic pyrophosphates generating different type of terpenoids. The polypeptide is Isoprenyl transferase (Oceanobacillus iheyensis (strain DSM 14371 / CIP 107618 / JCM 11309 / KCTC 3954 / HTE831)).